Reading from the N-terminus, the 92-residue chain is Small ribosomal subunit protein uS19c (92 aa).

It belongs to the universal ribosomal protein uS19 family.

The protein resides in the plastid. It localises to the chloroplast. Protein S19 forms a complex with S13 that binds strongly to the 16S ribosomal RNA. This Phaseolus angularis (Azuki bean) protein is Small ribosomal subunit protein uS19c.